We begin with the raw amino-acid sequence, 354 residues long: uncharacterized protein (354 aa).

It belongs to the asfivirus B354L family.

This is an uncharacterized protein from Ornithodoros (relapsing fever ticks).